Here is a 280-residue protein sequence, read N- to C-terminus: F420-dependent methylenetetrahydromethanopterin dehydrogenase (280 aa).

Belongs to the MTD family.

It carries out the reaction 5,10-methylenetetrahydromethanopterin + oxidized coenzyme F420-(gamma-L-Glu)(n) + 2 H(+) = 5,10-methenyl-5,6,7,8-tetrahydromethanopterin + reduced coenzyme F420-(gamma-L-Glu)(n). It functions in the pathway one-carbon metabolism; methanogenesis from CO(2); 5,10-methylene-5,6,7,8-tetrahydromethanopterin from 5,10-methenyl-5,6,7,8-tetrahydromethanopterin (coenzyme F420 route): step 1/1. Its function is as follows. Catalyzes the reversible reduction of methenyl-H(4)MPT(+) to methylene-H(4)MPT. The polypeptide is F420-dependent methylenetetrahydromethanopterin dehydrogenase (Methanosphaerula palustris (strain ATCC BAA-1556 / DSM 19958 / E1-9c)).